The sequence spans 272 residues: Glutamate racemase (272 aa).

Residues 9–10 and 41–42 contribute to the substrate site; these read DS and YG. Catalysis depends on C73, which acts as the Proton donor/acceptor. A substrate-binding site is contributed by 74–75; that stretch reads NT. The Proton donor/acceptor role is filled by C183. Substrate is bound at residue 184-185; sequence TH.

It belongs to the aspartate/glutamate racemases family.

The catalysed reaction is L-glutamate = D-glutamate. The protein operates within cell wall biogenesis; peptidoglycan biosynthesis. Functionally, provides the (R)-glutamate required for cell wall biosynthesis. This Shewanella sp. (strain MR-7) protein is Glutamate racemase.